A 209-amino-acid polypeptide reads, in one-letter code: Small ribosomal subunit protein uS3 (209 aa).

The 70-residue stretch at 38-107 folds into the KH type-2 domain; sequence IRNFIKKNYN…KFGIDIIELK (70 aa).

It belongs to the universal ribosomal protein uS3 family. In terms of assembly, part of the 30S ribosomal subunit. Forms a tight complex with proteins S10 and S14.

Its function is as follows. Binds the lower part of the 30S subunit head. Binds mRNA in the 70S ribosome, positioning it for translation. This chain is Small ribosomal subunit protein uS3, found in Fervidobacterium nodosum (strain ATCC 35602 / DSM 5306 / Rt17-B1).